Reading from the N-terminus, the 240-residue chain is Ribonuclease HII (240 aa).

Residues 31–222 (RLIAGVDEAG…VRRALGLETA (192 aa)) enclose the RNase H type-2 domain. Residues Asp37, Glu38, and Asp130 each contribute to the a divalent metal cation site.

Belongs to the RNase HII family. It depends on Mn(2+) as a cofactor. Requires Mg(2+) as cofactor.

It is found in the cytoplasm. It carries out the reaction Endonucleolytic cleavage to 5'-phosphomonoester.. Functionally, endonuclease that specifically degrades the RNA of RNA-DNA hybrids. This is Ribonuclease HII from Xanthomonas campestris pv. campestris (strain 8004).